The following is a 279-amino-acid chain: Putative short-chain type dehydrogenase/reductase MSMEG_6031/MSMEI_5872 (279 aa).

Position 11–33 (11–33) interacts with NAD(+); that stretch reads FITGAARGQGRSHAVRLAEEGAD. Lys-65 participates in a covalent cross-link: Isoglutamyl lysine isopeptide (Lys-Gln) (interchain with Q-Cter in protein Pup). Residue Ser-158 participates in substrate binding. Catalysis depends on Tyr-171, which acts as the Proton acceptor.

This sequence belongs to the short-chain dehydrogenases/reductases (SDR) family.

The polypeptide is Putative short-chain type dehydrogenase/reductase MSMEG_6031/MSMEI_5872 (Mycolicibacterium smegmatis (strain ATCC 700084 / mc(2)155) (Mycobacterium smegmatis)).